Here is a 995-residue protein sequence, read N- to C-terminus: uncharacterized protein (995 aa).

This is an uncharacterized protein from Caenorhabditis elegans.